The primary structure comprises 121 residues: Small ribosomal subunit protein uS13 (121 aa).

A disordered region spans residues 91 to 121 (HRKGLPLRGQRTRTNARTRKGPRKAGVALKK).

It belongs to the universal ribosomal protein uS13 family. As to quaternary structure, part of the 30S ribosomal subunit. Forms a loose heterodimer with protein S19. Forms two bridges to the 50S subunit in the 70S ribosome.

Its function is as follows. Located at the top of the head of the 30S subunit, it contacts several helices of the 16S rRNA. In the 70S ribosome it contacts the 23S rRNA (bridge B1a) and protein L5 of the 50S subunit (bridge B1b), connecting the 2 subunits; these bridges are implicated in subunit movement. Contacts the tRNAs in the A and P-sites. The polypeptide is Small ribosomal subunit protein uS13 (Cupriavidus pinatubonensis (strain JMP 134 / LMG 1197) (Cupriavidus necator (strain JMP 134))).